A 470-amino-acid polypeptide reads, in one-letter code: UDP-glycosyltransferase 91A1 (470 aa).

UDP-alpha-D-glucose is bound by residues Ser-290, 350-352 (VEQ), 367-375 (HPGWGTIIE), and 389-392 (VYDQ).

The protein belongs to the UDP-glycosyltransferase family.

This is UDP-glycosyltransferase 91A1 (UGT91A1) from Arabidopsis thaliana (Mouse-ear cress).